Reading from the N-terminus, the 363-residue chain is 3-isopropylmalate dehydrogenase (363 aa).

78–91 (GPKWEHLPPAEQPE) contributes to the NAD(+) binding site. Substrate-binding residues include arginine 99, arginine 109, arginine 138, and aspartate 227. Residues aspartate 227, aspartate 251, and aspartate 255 each contribute to the Mg(2+) site. 285 to 297 (GSAPDIAGKNIAN) lines the NAD(+) pocket.

The protein belongs to the isocitrate and isopropylmalate dehydrogenases family. LeuB type 1 subfamily. In terms of assembly, homodimer. The cofactor is Mg(2+). Mn(2+) serves as cofactor.

The protein localises to the cytoplasm. It carries out the reaction (2R,3S)-3-isopropylmalate + NAD(+) = 4-methyl-2-oxopentanoate + CO2 + NADH. Its pathway is amino-acid biosynthesis; L-leucine biosynthesis; L-leucine from 3-methyl-2-oxobutanoate: step 3/4. In terms of biological role, catalyzes the oxidation of 3-carboxy-2-hydroxy-4-methylpentanoate (3-isopropylmalate) to 3-carboxy-4-methyl-2-oxopentanoate. The product decarboxylates to 4-methyl-2 oxopentanoate. The polypeptide is 3-isopropylmalate dehydrogenase (Yersinia pestis).